The sequence spans 159 residues: Large ribosomal subunit protein uL13 (159 aa).

The protein belongs to the universal ribosomal protein uL13 family. As to quaternary structure, part of the 50S ribosomal subunit.

In terms of biological role, this protein is one of the early assembly proteins of the 50S ribosomal subunit, although it is not seen to bind rRNA by itself. It is important during the early stages of 50S assembly. The sequence is that of Large ribosomal subunit protein uL13 from Methanopyrus kandleri (strain AV19 / DSM 6324 / JCM 9639 / NBRC 100938).